The chain runs to 392 residues: Telomere-binding protein subunit beta (392 aa).

A disordered region spans residues 234-392; that stretch reads QQVESVQVQP…ASKASKRSKK (159 aa). Positions 247-256 are enriched in basic residues; that stretch reads GGAKGKKKAA. Residues 257–268 show a composition bias toward low complexity; that stretch reads TKSATKKTVAAK. The span at 269 to 284 shows a compositional bias: basic and acidic residues; that stretch reads KTAESADVRKSVDKIV. A compositionally biased stretch (polar residues) spans 328 to 343; it reads SPSGKKSTKTTDQMTM. Residues 374 to 384 show a composition bias toward low complexity; the sequence is GKASATSGKAS.

As to quaternary structure, heterodimer of an alpha and a beta subunit.

Its subcellular location is the nucleus. It localises to the chromosome. The protein resides in the telomere. In terms of biological role, may function as protective capping of the single-stranded telomeric overhang. May also participate in telomere length regulation during DNA replication. In Stylonychia mytilus (Ciliate), this protein is Telomere-binding protein subunit beta (STY43).